Consider the following 167-residue polypeptide: Menaquinol:cytochrome c reductase iron-sulfur subunit (167 aa).

The Rieske domain occupies 59–158 (TKEPQRFDFK…QEVKDGFLYL (100 aa)). The [2Fe-2S] cluster site is built by Cys100, His102, Cys121, and His124. A disulfide bridge links Cys105 with Cys123.

It belongs to the Rieske iron-sulfur protein family. In terms of assembly, the main subunits of the menaquinol:cytochrome c complex are a Rieske-type iron-sulfur protein (QcrA), a cytochrome b (QcrB) and a cytochrome c (QcrC). [2Fe-2S] cluster is required as a cofactor.

Its function is as follows. Component of the menaquinol:cytochrome c reductase complex. The Rieske protein is a high potential 2Fe-2S protein. This is Menaquinol:cytochrome c reductase iron-sulfur subunit (qcrA) from Bacillus subtilis (strain 168).